A 419-amino-acid polypeptide reads, in one-letter code: MKIQAPKGTKDVLPEESYIWQYVESKFRQICKLYGYQEVRFPTFEYTELFQRGVGETTDIVQKEMYTFLDKGGRSITLRPEGTASVARLFIEHGFASRPMPQRLYYIISAFRYENTQGGRYREFHQFGIENFGSKSPVTDAEIISLSYNFFVSLGLDNIVVNINSIGCPVCRKDYVKNLKEYFLGYYDKLCPTCKQRLDKNPMRILDCKEDNCKLIAQDAPKPIEYLCDECKTHFEALKGYLDAAGVCYKVDPYIVRGLDYYTRTVFEIVDVVLDKELAICGGGRYDNLIEQIGGSSTPGIGFAIGVERLIMLLSQKGLIPQKPQVPQVFIATLGDLATKKAFEIASTLRFEGISTVIEELSRSLKSQMKYADKLGCDFAVIIGDDELEKGVCKVREMKTSSEEVVRIEGLAQHIKSKI.

Belongs to the class-II aminoacyl-tRNA synthetase family. In terms of assembly, homodimer.

The protein localises to the cytoplasm. It catalyses the reaction tRNA(His) + L-histidine + ATP = L-histidyl-tRNA(His) + AMP + diphosphate + H(+). The sequence is that of Histidine--tRNA ligase from Caldicellulosiruptor saccharolyticus (strain ATCC 43494 / DSM 8903 / Tp8T 6331).